A 200-amino-acid chain; its full sequence is Probable nicotinate-nucleotide adenylyltransferase (200 aa).

This sequence belongs to the NadD family.

It catalyses the reaction nicotinate beta-D-ribonucleotide + ATP + H(+) = deamido-NAD(+) + diphosphate. It participates in cofactor biosynthesis; NAD(+) biosynthesis; deamido-NAD(+) from nicotinate D-ribonucleotide: step 1/1. In terms of biological role, catalyzes the reversible adenylation of nicotinate mononucleotide (NaMN) to nicotinic acid adenine dinucleotide (NaAD). This chain is Probable nicotinate-nucleotide adenylyltransferase, found in Lachnoclostridium phytofermentans (strain ATCC 700394 / DSM 18823 / ISDg) (Clostridium phytofermentans).